The sequence spans 206 residues: Transmembrane emp24 domain-containing protein bai (206 aa).

The first 20 residues, 1-20 (MARTLLILCTLMAWAWTGEA), serve as a signal peptide directing secretion. The Lumenal segment spans residues 21–172 (VMFKLTPNTQ…RDTNEKTNSR (152 aa)). A GOLD domain is found at 30-140 (QKCLKEDIQA…LKPLEVDLKR (111 aa)). The helical transmembrane segment at 173-193 (VLFFSIFSMCCLLGLATWQVL) threads the bilayer. Over 194–206 (YLRRYFKAKKLIE) the chain is Cytoplasmic.

Belongs to the EMP24/GP25L family.

It is found in the membrane. In terms of biological role, eca and bai are essential, though not redundant, for dorsoventral patterning of the embryo. Specifically required during early embryogenesis for the activity of maternal tkv, while the zygotic tkv is not affected. This Drosophila ananassae (Fruit fly) protein is Transmembrane emp24 domain-containing protein bai.